The primary structure comprises 325 residues: MTSGTRMPTWRERENNKRRERRRRAIAAKIFTGLRMYGNYELPKHCDNNEVLKALCNEAGWIVEPDGTTYRKGCSRPVERMEIGGGSATASPCSSYQPSPCASYNPSPGSSNFMSPASSSFANLTSGDGQSLIPWLKHLSTTSSSSASSSSRLPNYLYIPGGSISAPVTPPLSSPTARTPRMNTDWQQLNNSFFVSSTPPSPTRQIIPDSEWFSGIQLAQSVPASPTFSLVSQNPFGFKEEAASAAGGGGGSRMWTPGQSGTCSPAIPPGADQTADVPMSEAVAPPEFAFGSNTNGLVKAWEGERIHEESGSDDLELTLGNSSTR.

The disordered stretch occupies residues 1-21; that stretch reads MTSGTRMPTWRERENNKRRER. A required for DNA-binding region spans residues 6–89; sequence RMPTWREREN…RMEIGGGSAT (84 aa). Position 169 is a phosphothreonine (T169). The interval 304-325 is disordered; the sequence is ERIHEESGSDDLELTLGNSSTR.

This sequence belongs to the BZR/LAT61 family. Post-translationally, phosphorylated. Phosphorylation increases protein degradation.

The sequence is that of BES1/BZR1 homolog protein 4 (BEH4) from Arabidopsis thaliana (Mouse-ear cress).